Reading from the N-terminus, the 448-residue chain is Death-associated protein kinase 3 (448 aa).

The 263-residue stretch at 13-275 (YEMGEELGSG…IAQSLEHSWI (263 aa)) folds into the Protein kinase domain. Residues 19 to 27 (LGSGQFAIV) and lysine 42 contribute to the ATP site. Aspartate 139 acts as the Proton acceptor in catalysis. Residues 161-204 (DFGIAHRIEAGSEFKNIFGTPEFVAPEIVNYEPLGLEADMWSIG) are activation segment. Residues threonine 180 and threonine 225 each carry the phosphothreonine modification. Phosphothreonine; by autocatalysis is present on threonine 265. Phosphothreonine; by ROCK1 is present on threonine 265. A Phosphoserine; by DAPK1 modification is found at serine 304. Serine 306 is modified (phosphoserine; by autocatalysis and DAPK1). Serine 307, serine 313, and serine 321 each carry phosphoserine; by DAPK1. The interaction with CDC5L stretch occupies residues 390–448 (AQEEARAALLGAGGLKRRLCRLENRYDALAAQVAAEVQFVRDLVRALEQERLQAECGVR). The tract at residues 418-448 (LAAQVAAEVQFVRDLVRALEQERLQAECGVR) is required for interaction with ATF4 but not with PAWR. The interval 422–436 (VAAEVQFVRDLVRAL) is leucine-zipper.

The protein belongs to the protein kinase superfamily. CAMK Ser/Thr protein kinase family. DAP kinase subfamily. Homooligomer in its kinase-active form (homotrimers and homodimers are reported); monomeric in its kinase-inactive form. Homodimerization is required for activation segment autophosphorylation. Interacts with DAXX, ATF4, NLK, TCF7L2, UBE2D1, UBE2D2, UBE2D3 and CDC5L. Interacts with PAWR; also demonstrated in aorta smooth muscle cells indicative for the cytoskeletal targeting function of PAWR. Interacts with AR; enhanced by AATF. Interacts with LUZP1; the interaction is likely to occur throughout the cell cycle and reduces the LUZP1-mediated suppression of MYL9 phosphorylation. Mg(2+) serves as cofactor. Post-translationally, ubiquitinated. Ubiquitination mediated by the UBE2D3 E3 ligase does not lead to proteasomal degradation, but influences promyelocytic leukemia protein nuclear bodies (PML-NBs) formation in the nucleus. The phosphorylation status is critical for kinase activity, oligomerization and intracellular localization. Phosphorylation at Thr-180, Thr-225 and Thr-265 is essential for activity. The phosphorylated form is localized in the cytoplasm and nuclear translocation or retention is maximal when it is not phosphorylated. Phosphorylation increases the trimeric form, and its dephosphorylation favors a kinase-inactive monomeric form. In terms of tissue distribution, ubiquitously expressed in all tissue types examined. High levels in brain, heart, lung and spleen, lower expression in kidney, liver, skeletal muscle and testis. Isoform 2 is expressed in the smooth muscle.

The protein localises to the nucleus. It is found in the PML body. Its subcellular location is the cytoplasm. The protein resides in the cytoskeleton. It localises to the microtubule organizing center. The protein localises to the chromosome. It is found in the centromere. Its subcellular location is the spindle. The protein resides in the midbody. The catalysed reaction is L-seryl-[protein] + ATP = O-phospho-L-seryl-[protein] + ADP + H(+). It catalyses the reaction L-threonyl-[protein] + ATP = O-phospho-L-threonyl-[protein] + ADP + H(+). A sequential activation is proposed: autophosphorylation at consensus sites is leading to dimerization of the catalytic domain and activation segment exchange (producing an active confirmation of both kinase modules in trans) followed by phosphorylation at Thr-180 in the activation segment and at other regulatory sites. Phosphorylation at Thr-180, Thr-225 and Thr-265 is essential for activity. Inhibited by pyridone 6 (K00225), a potent, ATP-competitive inhibitor. Phosphorylation at Thr-180, Thr-225 and Thr-265 is essential for activity. In terms of biological role, serine/threonine kinase which is involved in the regulation of apoptosis, autophagy, transcription, translation and actin cytoskeleton reorganization. Regulates both type I (caspase-dependent) apoptotic and type II (caspase-independent) autophagic cell deaths signal, depending on the cellular setting. Involved in formation of promyelocytic leukemia protein nuclear body (PML-NB). Involved in apoptosis involving PAWR which mediates cytoplasmic relocation; in vitro phosphorylates PAWR. Regulates myosin phosphorylation in both smooth muscle and non-muscle cells. In smooth muscle, regulates myosin either directly by phosphorylating MYL12B and MYL9 or through inhibition of smooth muscle myosin phosphatase (SMPP1M) via phosphorylation of PPP1R12A; the inhibition of SMPP1M functions to enhance muscle responsiveness to Ca(2+) and promote a contractile state. Phosphorylates MYL12B in non-muscle cells leading to reorganization of actin cytoskeleton such as in regulation of cell polarity and cell migration. Positively regulates canonical Wnt/beta-catenin signaling through interaction with NLK and TCF7L2; disrupts the NLK-TCF7L2 complex thereby influencing the phosphorylation of TCF7L2 by NLK. Phosphorylates RPL13A on 'Ser-77' upon interferon-gamma activation which is causing RPL13A release from the ribosome, RPL13A association with the GAIT complex and its subsequent involvement in transcript-selective translation inhibition. Phosphorylates STAT3 and enhances its transcriptional activity. Enhances transcription from AR-responsive promoters in a hormone- and kinase-dependent manner. Phosphorylates histone H3 on 'Thr-11' at centromeres during mitosis. This chain is Death-associated protein kinase 3 (Dapk3), found in Rattus norvegicus (Rat).